Reading from the N-terminus, the 213-residue chain is Golgi SNAP receptor complex member 2 homolog memb-1 (213 aa).

Topologically, residues 1–189 (MEALYQSTNF…QVIDRRVRED (189 aa)) are cytoplasmic. Residues 190-210 (WILFVIGCIVCCIFMYAFYRF) form a helical; Anchor for type IV membrane protein membrane-spanning segment. The Vesicular segment spans residues 211–213 (WRG).

It belongs to the GOSR2 family. As to quaternary structure, part of a unique SNARE complex.

The protein resides in the golgi apparatus. It is found in the cis-Golgi network membrane. Its subcellular location is the golgi apparatus membrane. The protein localises to the endoplasmic reticulum membrane. Functionally, involved in transport of proteins from the cis/medial-Golgi to the trans-Golgi network. The protein is Golgi SNAP receptor complex member 2 homolog memb-1 of Caenorhabditis elegans.